Here is a 222-residue protein sequence, read N- to C-terminus: Peptidyl-prolyl cis-trans isomerase FKBP7 (222 aa).

An N-terminal signal peptide occupies residues 1-23 (MPKTMHFLFRFIVFFYLWGLFTA). Asparagine 45 carries an N-linked (GlcNAc...) asparagine glycan. The region spanning 53–145 (GDLLNAHYDG…IFEIELYAVT (93 aa)) is the PPIase FKBP-type domain. 2 consecutive EF-hand domains span residues 145–180 (TKGP…EFEK) and 189–222 (YQDA…HDEL). The Ca(2+) site is built by aspartate 158, aspartate 160, aspartate 162, glutamine 164, glutamate 169, aspartate 202, aspartate 204, aspartate 206, and glutamate 213. The Prevents secretion from ER signature appears at 219–222 (HDEL).

In terms of processing, glycosylated.

The protein localises to the endoplasmic reticulum lumen. It carries out the reaction [protein]-peptidylproline (omega=180) = [protein]-peptidylproline (omega=0). Functionally, PPIases accelerate the folding of proteins during protein synthesis. This Pongo abelii (Sumatran orangutan) protein is Peptidyl-prolyl cis-trans isomerase FKBP7 (FKBP7).